Consider the following 231-residue polypeptide: Regulatory protein VanRc (231 aa).

A Response regulatory domain is found at 4–117; the sequence is KIVVVDDEKE…EVVARVKTQL (114 aa). Position 53 is a 4-aspartylphosphate (aspartate 53). The ompR/PhoB-type DNA-binding region spans 132 to 231; sequence VEEYEKDGLI…VWGVGYIIEK (100 aa).

Phosphorylated by VanSc.

Its subcellular location is the cytoplasm. Member of the two-component regulatory system VanSc/VanRc. Binds to the promoter regions of target genes. Activates the transcription of vanC1 and vanXYC in response to vancomycin which results in vancomycin resistance. The sequence is that of Regulatory protein VanRc from Enterococcus gallinarum.